A 571-amino-acid chain; its full sequence is Proline--tRNA ligase (571 aa).

It belongs to the class-II aminoacyl-tRNA synthetase family. ProS type 1 subfamily. In terms of assembly, homodimer.

The protein localises to the cytoplasm. It catalyses the reaction tRNA(Pro) + L-proline + ATP = L-prolyl-tRNA(Pro) + AMP + diphosphate. Functionally, catalyzes the attachment of proline to tRNA(Pro) in a two-step reaction: proline is first activated by ATP to form Pro-AMP and then transferred to the acceptor end of tRNA(Pro). As ProRS can inadvertently accommodate and process non-cognate amino acids such as alanine and cysteine, to avoid such errors it has two additional distinct editing activities against alanine. One activity is designated as 'pretransfer' editing and involves the tRNA(Pro)-independent hydrolysis of activated Ala-AMP. The other activity is designated 'posttransfer' editing and involves deacylation of mischarged Ala-tRNA(Pro). The misacylated Cys-tRNA(Pro) is not edited by ProRS. The polypeptide is Proline--tRNA ligase (Psychromonas ingrahamii (strain DSM 17664 / CCUG 51855 / 37)).